Reading from the N-terminus, the 428-residue chain is UPF0229 protein YeaH (428 aa).

Residues 77-90 (PGNDHFIQNDRIER) show a composition bias toward basic and acidic residues. The tract at residues 77-111 (PGNDHFIQNDRIERPQSGGGGGSGSGQGQASQDGE) is disordered. The span at 93–103 (SGGGGGSGSGQ) shows a compositional bias: gly residues.

It belongs to the UPF0229 family.

This is UPF0229 protein YeaH from Salmonella typhi.